The chain runs to 236 residues: Phosphoribosylaminoimidazole-succinocarboxamide synthase (236 aa).

The protein belongs to the SAICAR synthetase family.

It catalyses the reaction 5-amino-1-(5-phospho-D-ribosyl)imidazole-4-carboxylate + L-aspartate + ATP = (2S)-2-[5-amino-1-(5-phospho-beta-D-ribosyl)imidazole-4-carboxamido]succinate + ADP + phosphate + 2 H(+). Its pathway is purine metabolism; IMP biosynthesis via de novo pathway; 5-amino-1-(5-phospho-D-ribosyl)imidazole-4-carboxamide from 5-amino-1-(5-phospho-D-ribosyl)imidazole-4-carboxylate: step 1/2. This is Phosphoribosylaminoimidazole-succinocarboxamide synthase from Campylobacter jejuni subsp. jejuni serotype O:2 (strain ATCC 700819 / NCTC 11168).